The chain runs to 559 residues: Dihydroxy-acid dehydratase (559 aa).

A Mg(2+)-binding site is contributed by aspartate 78. [2Fe-2S] cluster is bound at residue cysteine 119. Mg(2+)-binding residues include aspartate 120 and lysine 121. At lysine 121 the chain carries N6-carboxylysine. Cysteine 192 contributes to the [2Fe-2S] cluster binding site. Glutamate 446 contributes to the Mg(2+) binding site. The active-site Proton acceptor is the serine 472.

The protein belongs to the IlvD/Edd family. Homodimer. [2Fe-2S] cluster is required as a cofactor. It depends on Mg(2+) as a cofactor.

It catalyses the reaction (2R)-2,3-dihydroxy-3-methylbutanoate = 3-methyl-2-oxobutanoate + H2O. The enzyme catalyses (2R,3R)-2,3-dihydroxy-3-methylpentanoate = (S)-3-methyl-2-oxopentanoate + H2O. It participates in amino-acid biosynthesis; L-isoleucine biosynthesis; L-isoleucine from 2-oxobutanoate: step 3/4. The protein operates within amino-acid biosynthesis; L-valine biosynthesis; L-valine from pyruvate: step 3/4. Functions in the biosynthesis of branched-chain amino acids. Catalyzes the dehydration of (2R,3R)-2,3-dihydroxy-3-methylpentanoate (2,3-dihydroxy-3-methylvalerate) into 2-oxo-3-methylpentanoate (2-oxo-3-methylvalerate) and of (2R)-2,3-dihydroxy-3-methylbutanoate (2,3-dihydroxyisovalerate) into 2-oxo-3-methylbutanoate (2-oxoisovalerate), the penultimate precursor to L-isoleucine and L-valine, respectively. The protein is Dihydroxy-acid dehydratase of Wolinella succinogenes (strain ATCC 29543 / DSM 1740 / CCUG 13145 / JCM 31913 / LMG 7466 / NCTC 11488 / FDC 602W) (Vibrio succinogenes).